A 686-amino-acid chain; its full sequence is Zinc finger protein 7 (686 aa).

The KRAB domain occupies 4–76 (VTFGDVAVHF…DLQGAEGTEA (73 aa)). Glycyl lysine isopeptide (Lys-Gly) (interchain with G-Cter in SUMO2) cross-links involve residues Lys-81 and Lys-101. Phosphoserine is present on residues Ser-126 and Ser-138. C2H2-type zinc fingers lie at residues 223-245 (SRCQ…NNCH), 250-272 (YECA…QRIH), 278-300 (FKCT…QRIH), 306-328 (YRCE…QRIH), 334-356 (YGCR…QRTH), and 362-384 (YPCK…QRMH). Residues Lys-279 and Lys-292 each participate in a glycyl lysine isopeptide (Lys-Gly) (interchain with G-Cter in SUMO2) cross-link. Residue Lys-393 forms a Glycyl lysine isopeptide (Lys-Gly) (interchain with G-Cter in SUMO2) linkage. C2H2-type zinc fingers lie at residues 413-435 (FKCD…QLIH), 441-463 (YKCN…QRTH), 469-491 (FKCD…QRIH), 497-519 (YVCN…QRIH), 525-547 (YECL…QRVH), 553-575 (YKCN…QIIH), 581-603 (YECS…QRIH), 634-656 (HQCE…QRIH), and 662-684 (YKCN…QKIH).

Belongs to the krueppel C2H2-type zinc-finger protein family.

The protein resides in the nucleus. Functionally, may be involved in transcriptional regulation. This chain is Zinc finger protein 7 (ZNF7), found in Pongo abelii (Sumatran orangutan).